The chain runs to 404 residues: Probable eukaryotic initiation factor 4A (404 aa).

Positions 1 to 28 (MAQQGKVEPQDQDSFLDDQPGIRPIPSF) are disordered. The Q motif signature appears at 26–54 (PSFDDMPLHQNLLRGIYSHGFEKPSSIQQ). Residues 57 to 231 (IVPFTRGGDI…KKFMRDPTRI (175 aa)) form the Helicase ATP-binding domain. Residue 70–77 (AQSGTGKT) coordinates ATP. The short motif at 179–182 (DEAD) is the DEAD box element. One can recognise a Helicase C-terminal domain in the interval 242–402 (GIKQYFIAVE…ELPVDFAAYL (161 aa)).

This sequence belongs to the DEAD box helicase family. eIF4A subfamily. As to quaternary structure, eIF4F is a multi-subunit complex, the composition of which varies with external and internal environmental conditions. It is composed of at least EIF4A, EIF4E and EIF4G.

The catalysed reaction is ATP + H2O = ADP + phosphate + H(+). Functionally, ATP-dependent RNA helicase which is a subunit of the eIF4F complex involved in cap recognition and is required for mRNA binding to ribosome. In the current model of translation initiation, eIF4A unwinds RNA secondary structures in the 5'-UTR of mRNAs which is necessary to allow efficient binding of the small ribosomal subunit, and subsequent scanning for the initiator codon. The chain is Probable eukaryotic initiation factor 4A from Trypanosoma cruzi (strain CL Brener).